A 43-amino-acid polypeptide reads, in one-letter code: uncharacterized protein (43 aa).

2 stretches are compositionally biased toward polar residues: residues 1–19 (MSQK…SGAS) and 33–43 (PENSISKTFSK). Positions 1–43 (MSQKLSFFQQNTRNGSGASRTLVIKPPTIQPKPENSISKTFSK) are disordered.

This is an uncharacterized protein from Dictyostelium discoideum (Social amoeba).